The sequence spans 198 residues: Fimbriae W protein (198 aa).

Residues 127-192 form the HTH luxR-type domain; that stretch reads HYCTTRHFSV…QFLKYIRVNL (66 aa).

Its subcellular location is the fimbrium. The protein is Fimbriae W protein (fimW) of Salmonella typhimurium (strain LT2 / SGSC1412 / ATCC 700720).